The sequence spans 186 residues: Lumazine protein (186 aa).

2 Lumazine-binding repeats span residues Met1–Gly96 and Gly97–Trp186.

It depends on 6,7-dimethyl-8-(1-D-ribityl)lumazine as a cofactor.

Its function is as follows. Antenna protein that modulates the color of the bioluminescence emission of the luciferase. In the presence of LumP, luciferase emission is shifted to higher energy values (shorter wavelength). This Photobacterium leiognathi protein is Lumazine protein (lumP).